The following is a 518-amino-acid chain: UDP-N-acetylmuramate--L-alanine ligase (518 aa).

Glycine 158–threonine 164 contributes to the ATP binding site.

The protein belongs to the MurCDEF family.

The protein resides in the cytoplasm. It catalyses the reaction UDP-N-acetyl-alpha-D-muramate + L-alanine + ATP = UDP-N-acetyl-alpha-D-muramoyl-L-alanine + ADP + phosphate + H(+). The protein operates within cell wall biogenesis; peptidoglycan biosynthesis. In terms of biological role, cell wall formation. This chain is UDP-N-acetylmuramate--L-alanine ligase, found in Crocosphaera subtropica (strain ATCC 51142 / BH68) (Cyanothece sp. (strain ATCC 51142)).